The sequence spans 123 residues: Histone H2B.3 (123 aa).

The disordered stretch occupies residues methionine 1 to lysine 30. Serine 110 carries O-linked (GlcNAc) serine glycosylation. Lysine 118 participates in a covalent cross-link: Glycyl lysine isopeptide (Lys-Gly) (interchain with G-Cter in ubiquitin).

This sequence belongs to the histone H2B family. As to quaternary structure, the nucleosome is a histone octamer containing two molecules each of H2A, H2B, H3 and H4 assembled in one H3-H4 heterotetramer and two H2A-H2B heterodimers. The octamer wraps approximately 147 bp of DNA. Post-translationally, monoubiquitination of Lys-118 gives a specific tag for epigenetic transcriptional activation and is also prerequisite for histone H3 'Lys-4' and 'Lys-79' methylation. In terms of processing, glcNAcylation at Ser-110 promotes monoubiquitination of Lys-118. It fluctuates in response to extracellular glucose, and associates with transcribed genes.

Its subcellular location is the nucleus. It is found in the chromosome. Functionally, core component of nucleosome. Nucleosomes wrap and compact DNA into chromatin, limiting DNA accessibility to the cellular machineries which require DNA as a template. Histones thereby play a central role in transcription regulation, DNA repair, DNA replication and chromosomal stability. DNA accessibility is regulated via a complex set of post-translational modifications of histones, also called histone code, and nucleosome remodeling. The protein is Histone H2B.3 of Tigriopus californicus (Marine copepod).